Reading from the N-terminus, the 794-residue chain is Mitochondrial intermediate peptidase (794 aa).

Residues 1–39 (MRVTSSRLLQGGSLVSRVLKRRLNNASRTKKGWFSTRTL) constitute a mitochondrion transit peptide. His-581 lines the Zn(2+) pocket. Glu-582 is an active-site residue. Positions 585 and 588 each coordinate Zn(2+).

It belongs to the peptidase M3 family. Requires Zn(2+) as cofactor.

It localises to the mitochondrion matrix. The enzyme catalyses Release of an N-terminal octapeptide as second stage of processing of some proteins imported into the mitochondrion.. Functionally, cleaves proteins, imported into the mitochondrion, to their mature size. While most mitochondrial precursor proteins are processed to the mature form in one step by mitochondrial processing peptidase (MPP), the sequential cleavage by MIP of an octapeptide after initial processing by MPP is a required step for a subgroup of nuclear-encoded precursor proteins destined for the matrix or the inner membrane. This chain is Mitochondrial intermediate peptidase (OCT1), found in Debaryomyces hansenii (strain ATCC 36239 / CBS 767 / BCRC 21394 / JCM 1990 / NBRC 0083 / IGC 2968) (Yeast).